Reading from the N-terminus, the 122-residue chain is Large ribosomal subunit protein uL18 (122 aa).

It belongs to the universal ribosomal protein uL18 family. Part of the 50S ribosomal subunit; part of the 5S rRNA/L5/L18/L25 subcomplex. Contacts the 5S and 23S rRNAs.

Functionally, this is one of the proteins that bind and probably mediate the attachment of the 5S RNA into the large ribosomal subunit, where it forms part of the central protuberance. The protein is Large ribosomal subunit protein uL18 of Geobacter sp. (strain M21).